Reading from the N-terminus, the 241-residue chain is CRISPR-associated endoribonuclease Cas6 2 (241 aa).

Residue Tyr28 is the Proton acceptor of the active site. Catalysis depends on His40, which acts as the Proton donor.

The protein belongs to the CRISPR-associated protein Cas6/Cse3/CasE family.

In terms of biological role, CRISPR (clustered regularly interspaced short palindromic repeat) is an adaptive immune system that provides protection against mobile genetic elements (viruses, transposable elements and conjugative plasmids). CRISPR clusters contain sequences complementary to antecedent mobile elements and target invading nucleic acids. CRISPR clusters are transcribed and processed into CRISPR RNA (crRNA). This protein processes pre-crRNA into individual crRNA units. This is CRISPR-associated endoribonuclease Cas6 2 (cas6b) from Methanocaldococcus jannaschii (strain ATCC 43067 / DSM 2661 / JAL-1 / JCM 10045 / NBRC 100440) (Methanococcus jannaschii).